The primary structure comprises 312 residues: Pyridoxal kinase (312 aa).

M1 carries the post-translational modification N-acetylmethionine. The pyridoxal site is built by S12 and T47. Residue T47 participates in pyridoxal 5'-phosphate binding. A Phosphoserine modification is found at S59. D113 serves as a coordination point for ATP. Residue D113 coordinates Na(+). D118 contacts Mg(2+). Residue T148 participates in Na(+) binding. N150–E153 contacts ATP. The residue at position 164 (S164) is a Phosphoserine. T186 contacts Na(+). Residue T186–S187 participates in ATP binding. The residue at position 213 (S213) is a Phosphoserine. ATP contacts are provided by residues V226–A228 and T233. G234 to D235 lines the pyridoxal 5'-phosphate pocket. The Proton acceptor role is filled by D235. S285 carries the post-translational modification Phosphoserine.

This sequence belongs to the pyridoxine kinase family. As to quaternary structure, homodimer. The cofactor is Mg(2+). Zn(2+) serves as cofactor. Requires Co(2+) as cofactor. Mn(2+) is required as a cofactor. Ubiquitous. Highly expressed in testis. In terms of tissue distribution, in adult testis and spermatozoa.

Its subcellular location is the cytoplasm. The protein localises to the cytosol. It catalyses the reaction pyridoxal + ATP = pyridoxal 5'-phosphate + ADP + H(+). The catalysed reaction is pyridoxamine + ATP = pyridoxamine 5'-phosphate + ADP + H(+). It carries out the reaction pyridoxine + ATP = pyridoxine 5'-phosphate + ADP + H(+). Its pathway is cofactor metabolism; pyridoxal 5'-phosphate salvage; pyridoxal 5'-phosphate from pyridoxal: step 1/1. The protein operates within cofactor metabolism; pyridoxal 5'-phosphate salvage; pyridoxine 5'-phosphate from pyridoxine: step 1/1. It participates in cofactor metabolism; pyridoxal 5'-phosphate salvage; pyridoxamine 5'-phosphate from pyridoxamine: step 1/1. Its activity is regulated as follows. Catalytic activity is inhibited competitively by 4-deoxypyridoxine, and is also inhibited by the benzodiazepine receptor ligands 1012S and ethyl-beta-carboline-3-carboxylate. Inhibited by ginkgotoxin, theophylline, lamotrigine, enprofylline, theobromine, and caffeine. Activity is increased in the presence of K(+)or Na(+). In terms of biological role, catalyzes the phosphorylation of the dietary vitamin B6 vitamers pyridoxal (PL), pyridoxine (PN) and pyridoxamine (PM) to form pyridoxal 5'-phosphate (PLP), pyridoxine 5'-phosphate (PNP) and pyridoxamine 5'-phosphate (PMP), respectively. PLP is the active form of vitamin B6, and acts as a cofactor for over 140 different enzymatic reactions. The sequence is that of Pyridoxal kinase from Homo sapiens (Human).